The primary structure comprises 133 residues: ATP synthase epsilon chain (133 aa).

This sequence belongs to the ATPase epsilon chain family. In terms of assembly, F-type ATPases have 2 components, CF(1) - the catalytic core - and CF(0) - the membrane proton channel. CF(1) has five subunits: alpha(3), beta(3), gamma(1), delta(1), epsilon(1). CF(0) has three main subunits: a, b and c.

The protein localises to the cell membrane. Produces ATP from ADP in the presence of a proton gradient across the membrane. In Mycoplasma pneumoniae (strain ATCC 29342 / M129 / Subtype 1) (Mycoplasmoides pneumoniae), this protein is ATP synthase epsilon chain (atpC).